A 105-amino-acid chain; its full sequence is UPF0235 protein RAF_ORF1191 (105 aa).

Belongs to the UPF0235 family.

This Rickettsia africae (strain ESF-5) protein is UPF0235 protein RAF_ORF1191.